The primary structure comprises 337 residues: Protein LEG1 homolog (337 aa).

An N-terminal signal peptide occupies residues 1-20 (MAVLASWVWVLAGCFCAAVA). An N-linked (GlcNAc...) asparagine glycan is attached at Asn171.

This sequence belongs to the LEG1 family.

The protein resides in the secreted. May be involved in early liver development. The protein is Protein LEG1 homolog of Mus musculus (Mouse).